A 187-amino-acid chain; its full sequence is Elongation factor P (187 aa).

This sequence belongs to the elongation factor P family.

The protein localises to the cytoplasm. Its pathway is protein biosynthesis; polypeptide chain elongation. Its function is as follows. Involved in peptide bond synthesis. Stimulates efficient translation and peptide-bond synthesis on native or reconstituted 70S ribosomes in vitro. Probably functions indirectly by altering the affinity of the ribosome for aminoacyl-tRNA, thus increasing their reactivity as acceptors for peptidyl transferase. This chain is Elongation factor P, found in Desulfotalea psychrophila (strain LSv54 / DSM 12343).